The chain runs to 71 residues: Large ribosomal subunit protein uL29 (71 aa).

It belongs to the universal ribosomal protein uL29 family.

The chain is Large ribosomal subunit protein uL29 from Rickettsia canadensis (strain McKiel).